We begin with the raw amino-acid sequence, 523 residues long: Probable DNA ligase (523 aa).

E210 serves as a coordination point for ATP. K212 serves as the catalytic N6-AMP-lysine intermediate. 6 residues coordinate ATP: R217, R232, E261, F317, R388, and K394.

The protein belongs to the ATP-dependent DNA ligase family. Requires Mg(2+) as cofactor.

It catalyses the reaction ATP + (deoxyribonucleotide)n-3'-hydroxyl + 5'-phospho-(deoxyribonucleotide)m = (deoxyribonucleotide)n+m + AMP + diphosphate.. DNA ligase that seals nicks in double-stranded DNA during DNA replication, DNA recombination and DNA repair. The chain is Probable DNA ligase from Nocardia farcinica (strain IFM 10152).